We begin with the raw amino-acid sequence, 133 residues long: Adenosine 5'-monophosphoramidase hnt1 (133 aa).

In terms of domain architecture, HIT spans 4–107 (IFCKIVKGDI…IPKPNEEYGL (104 aa)). Residues 29–30 (DI), N81, 87–89 (HQF), and 94–96 (HFH) contribute to the AMP site. Residues 92–96 (HVHFH) carry the Histidine triad motif motif. The Tele-AMP-histidine intermediate role is filled by H94.

It belongs to the HINT family. In terms of assembly, homodimer. Mg(2+) is required as a cofactor.

The protein resides in the nucleus. It catalyses the reaction adenosine 5'-phosphoramidate + H2O = AMP + NH4(+). Functionally, hydrolyzes adenosine 5'-monophosphoramidate substrates such as AMP-morpholidate, AMP-N-alanine methyl ester, AMP-alpha-acetyl lysine methyl ester and AMP-NH2. This Schizosaccharomyces pombe (strain 972 / ATCC 24843) (Fission yeast) protein is Adenosine 5'-monophosphoramidase hnt1 (hnt1).